We begin with the raw amino-acid sequence, 2375 residues long: CCR4-NOT transcription complex subunit 1 (2375 aa).

3 consecutive short sequence motifs (LXXLL) follow at residues 153 to 157 (LPDLL), 181 to 185 (LHLLL), and 223 to 227 (LAPLL). S318 bears the Phosphoserine mark. The LXXLL motif lies at 570–574 (LSMLL). Residues 725–770 (SAAPHTQSMQGFPPNLGSAFSTPQSPAKAFPPLSTPNQTTAFSGIG) are disordered. Residues 799–1014 (NNDPFVQRKL…QGSITTPGSI (216 aa)) form an interaction with ZFP36 region. S1060 carries the phosphoserine modification. The interval 1089 to 1604 (EPPENIQEKI…AQPMKQAWAT (516 aa)) is interaction with CNOT6, CNOT6L, CNOT7 and CNOT8. Residues 1314-1326 (QLSAPKKDVKQPE) are compositionally biased toward basic and acidic residues. Positions 1314–1351 (QLSAPKKDVKQPEELPAITTTTTSTTPATSTTCTATVP) are disordered. The segment covering 1332-1349 (TTTTTSTTPATSTTCTAT) has biased composition (low complexity). 3 short sequence motifs (LXXLL) span residues 1638 to 1642 (LRSLL), 1941 to 1945 (LIALL), and 2095 to 2099 (LRVLL).

Belongs to the CNOT1 family. In terms of assembly, component of the CCR4-NOT complex; distinct complexes seem to exist that differ in the participation of probably mutually exclusive catalytic subunits. In the complex, interacts directly with CNOT6, CNOT6L, CNOT7 or CNOT8. Interacts in a ligand-dependent fashion with ESR1 and RXRA. Interacts with NANOS2, TOB1 and ZFP36. Interacts with TNRC6A, TNRC6B or TNRC6C; the interactions are direct. Interacts with YTHDF2; the interaction is direct and promotes recruitment of the CCR4-NOT complex to N6-methyladenosine (m6A)-containing mRNAs, leading to their deadenylation and subsequent degradation. Interacts with EIF4ENIF1/4E-T. Interacts in an RNA-independent manner with BICC1 (via KH domains). Interacts with TEX13A; the interaction may inhibit CNOT1 binding to mRNA and subsequently CNOT1-mediated mRNA degradation.

It localises to the cytoplasm. The protein localises to the P-body. It is found in the nucleus. Functionally, scaffolding component of the CCR4-NOT complex which is one of the major cellular mRNA deadenylases and is linked to various cellular processes including bulk mRNA degradation, miRNA-mediated repression, translational repression during translational initiation and general transcription regulation. Additional complex functions may be a consequence of its influence on mRNA expression. Its scaffolding function implies its interaction with the catalytic complex module and diverse RNA-binding proteins mediating the complex recruitment to selected mRNA 3'UTRs. Involved in degradation of AU-rich element (ARE)-containing mRNAs probably via association with ZFP36. Mediates the recruitment of the CCR4-NOT complex to miRNA targets and to the RISC complex via association with TNRC6A, TNRC6B or TNRC6C. Acts as a transcriptional repressor. Represses the ligand-dependent transcriptional activation by nuclear receptors. Involved in the maintenance of embryonic stem (ES) cell identity; prevents their differentiation towards extraembryonic trophectoderm lineages. Plays a role in rapid sperm motility via mediating timely mRNA turnover. This Mus musculus (Mouse) protein is CCR4-NOT transcription complex subunit 1 (Cnot1).